A 1164-amino-acid chain; its full sequence is DNA-directed RNA polymerase subunit beta (1164 aa).

Disordered regions lie at residues 975 to 994 and 1143 to 1164; these read RSSLPNRDGERQVDDFGKSN and ANAALGINLSRDERPDADMDVS. 2 stretches are compositionally biased toward basic and acidic residues: residues 981 to 991 and 1152 to 1164; these read RDGERQVDDFG and SRDERPDADMDVS.

It belongs to the RNA polymerase beta chain family. In terms of assembly, the RNAP catalytic core consists of 2 alpha, 1 beta, 1 beta' and 1 omega subunit. When a sigma factor is associated with the core the holoenzyme is formed, which can initiate transcription.

It catalyses the reaction RNA(n) + a ribonucleoside 5'-triphosphate = RNA(n+1) + diphosphate. Its function is as follows. DNA-dependent RNA polymerase catalyzes the transcription of DNA into RNA using the four ribonucleoside triphosphates as substrates. The chain is DNA-directed RNA polymerase subunit beta from Corynebacterium jeikeium (strain K411).